The sequence spans 161 residues: Fatty acid-binding protein homolog 2 (161 aa).

The signal sequence occupies residues 1–19; that stretch reads MSSKFLILLAFCGATLVAA.

This sequence belongs to the calycin superfamily. Fatty-acid binding protein (FABP) family.

It is found in the secreted. Its function is as follows. May play a role in sequestering potentially toxic fatty acids and their peroxidation products, or it may be involved in the maintenance of the impermeable lipid layer of the eggshell. The protein is Fatty acid-binding protein homolog 2 (lbp-2) of Caenorhabditis elegans.